Reading from the N-terminus, the 119-residue chain is uncharacterized protein (119 aa).

The disordered stretch occupies residues 1-22 (MQGQAGKRKTDGKVPSNTEQNC).

This is an uncharacterized protein from Saccharomyces cerevisiae (strain ATCC 204508 / S288c) (Baker's yeast).